Here is a 547-residue protein sequence, read N- to C-terminus: Chaperonin GroEL (547 aa).

ATP-binding positions include 30 to 33 (TLGP), Lys-51, 87 to 91 (DGTTT), Gly-415, 479 to 481 (NAA), and Asp-495.

The protein belongs to the chaperonin (HSP60) family. Forms a cylinder of 14 subunits composed of two heptameric rings stacked back-to-back. Interacts with the co-chaperonin GroES.

Its subcellular location is the cytoplasm. It carries out the reaction ATP + H2O + a folded polypeptide = ADP + phosphate + an unfolded polypeptide.. Together with its co-chaperonin GroES, plays an essential role in assisting protein folding. The GroEL-GroES system forms a nano-cage that allows encapsulation of the non-native substrate proteins and provides a physical environment optimized to promote and accelerate protein folding. In Cupriavidus pinatubonensis (strain JMP 134 / LMG 1197) (Cupriavidus necator (strain JMP 134)), this protein is Chaperonin GroEL.